A 347-amino-acid chain; its full sequence is Tyrosine recombinase XerC 2 (347 aa).

Residues 17 to 108 (LVLTRYMEAH…PLKTWFKWLA (92 aa)) form the Core-binding (CB) domain. Positions 125–313 (KLPKHLPRAI…SIEHLRAIHD (189 aa)) constitute a Tyr recombinase domain. Residues R170, K195, H265, R268, and H291 contribute to the active site. Catalysis depends on Y300, which acts as the O-(3'-phospho-DNA)-tyrosine intermediate.

The protein belongs to the 'phage' integrase family.

Its subcellular location is the cytoplasm. In terms of biological role, site-specific tyrosine recombinase, which acts by catalyzing the cutting and rejoining of the recombining DNA molecules. This is Tyrosine recombinase XerC 2 from Ralstonia nicotianae (strain ATCC BAA-1114 / GMI1000) (Ralstonia solanacearum).